A 1050-amino-acid chain; its full sequence is Self-sufficient cytochrome P450 monooxygenase CYP505E5 (1050 aa).

Position 405 (C405) interacts with heme. The segment at 467-491 (RRSMLVARDGSSGESSNHLAEARGD) is disordered. The Flavodoxin-like domain occupies 500 to 641 (VSFFYGSNSG…DLEAWEETSL (142 aa)). Residues 506 to 510 (SNSGT) and 585 to 617 (VFGC…TRLA) each bind FMN. One can recognise an FAD-binding FR-type domain in the interval 679–907 (KGLIEAKVTA…RPAKESFHLP (229 aa)).

This sequence in the N-terminal section; belongs to the cytochrome P450 family. Requires FAD as cofactor. The cofactor is FMN. Heme serves as cofactor.

The enzyme catalyses 2 oxidized [cytochrome P450] + NADPH = 2 reduced [cytochrome P450] + NADP(+) + H(+). It carries out the reaction an organic molecule + reduced [NADPH--hemoprotein reductase] + O2 = an alcohol + oxidized [NADPH--hemoprotein reductase] + H2O + H(+). It catalyses the reaction dodecanoate + reduced [NADPH--hemoprotein reductase] + O2 = 5-hydroxydodecanoate + oxidized [NADPH--hemoprotein reductase] + H2O + H(+). The catalysed reaction is tetradecanoate + reduced [NADPH--hemoprotein reductase] + O2 = 7-hydroxytetradecanoate + oxidized [NADPH--hemoprotein reductase] + H2O + H(+). The enzyme catalyses dodecan-1-ol + reduced [NADPH--hemoprotein reductase] + O2 = 1,5-dodecanediol + oxidized [NADPH--hemoprotein reductase] + H2O + H(+). It carries out the reaction dodecan-1-ol + reduced [NADPH--hemoprotein reductase] + O2 = 1,4-dodecanediol + oxidized [NADPH--hemoprotein reductase] + H2O + H(+). It catalyses the reaction dodecan-1-ol + reduced [NADPH--hemoprotein reductase] + O2 = 1,6-dodecanediol + oxidized [NADPH--hemoprotein reductase] + H2O + H(+). Self-sufficient cytochrome P450 monooxygenase that catalyzes the regioselective in-chain hydroxylation of alkanes, fatty alcohols, and fatty acids at the omega-7 position. Performs hydroxylation of C10-C16 n-alkanes and C12 and C14 fatty alcohols; and thereby enables the one step biocatalytic synthesis of rare alcohols such as 5-dodecanol and 7-tetradecanol. Converts 1-dodecanol into 1,5-dodecanediol as major product with very little sub-terminally hydroxylated products with the 1,4-dodecanediol and 1,6-dodecanediol more abundant. Converts dodecanoic acid to 5-hydroxydodecanoic acid which can be further converted into delta-dodecalactone by lactonization of the 5-hydroxy acid at low pH. Also gives sub-terminal hydroxylation of dodecanoic acid with 9-hydroxydodecanoic acid being the second most abundant product. The polypeptide is Self-sufficient cytochrome P450 monooxygenase CYP505E5 (Aspergillus niger).